A 129-amino-acid polypeptide reads, in one-letter code: Phosphomevalonate dehydratase small subunit (129 aa).

Ser61 functions as the Proton acceptor in the catalytic mechanism.

The protein belongs to the AcnX type II small subunit family. In terms of assembly, heterodimer composed of a large subunit (PMDh-L) and a small subunit (PMDh-S).

It carries out the reaction (R)-5-phosphomevalonate = (2E)-3-methyl-5-phosphooxypent-2-enoate + H2O. The protein operates within isoprenoid biosynthesis; isopentenyl diphosphate biosynthesis via mevalonate pathway. Functionally, component of a hydro-lyase that catalyzes the dehydration of mevalonate 5-phosphate (MVA5P) to form trans-anhydromevalonate 5-phosphate (tAHMP). Involved in the archaeal mevalonate (MVA) pathway, which provides fundamental precursors for isoprenoid biosynthesis, such as isopentenyl diphosphate (IPP) and dimethylallyl diphosphate (DMAPP). The protein is Phosphomevalonate dehydratase small subunit of Methanocaldococcus jannaschii (strain ATCC 43067 / DSM 2661 / JAL-1 / JCM 10045 / NBRC 100440) (Methanococcus jannaschii).